A 600-amino-acid polypeptide reads, in one-letter code: Probable methyltransferase PMT21 (600 aa).

Residues methionine 1 to arginine 16 are Cytoplasmic-facing. Residues isoleucine 17–leucine 37 traverse the membrane as a helical; Signal-anchor for type II membrane protein segment. At tyrosine 38–asparagine 600 the chain is on the lumenal side. N-linked (GlcNAc...) asparagine glycosylation occurs at asparagine 594.

Belongs to the methyltransferase superfamily.

It is found in the endoplasmic reticulum membrane. This chain is Probable methyltransferase PMT21 (ERD3), found in Arabidopsis thaliana (Mouse-ear cress).